A 362-amino-acid polypeptide reads, in one-letter code: Peptide chain release factor 1 (362 aa).

Position 237 is an N5-methylglutamine (Q237).

The protein belongs to the prokaryotic/mitochondrial release factor family. In terms of processing, methylated by PrmC. Methylation increases the termination efficiency of RF1.

Its subcellular location is the cytoplasm. Its function is as follows. Peptide chain release factor 1 directs the termination of translation in response to the peptide chain termination codons UAG and UAA. The chain is Peptide chain release factor 1 (prfA) from Aquifex aeolicus (strain VF5).